A 253-amino-acid chain; its full sequence is Imidazole glycerol phosphate synthase subunit HisF (253 aa).

Residues D11 and D130 contribute to the active site.

It belongs to the HisA/HisF family. As to quaternary structure, heterodimer of HisH and HisF.

It is found in the cytoplasm. The catalysed reaction is 5-[(5-phospho-1-deoxy-D-ribulos-1-ylimino)methylamino]-1-(5-phospho-beta-D-ribosyl)imidazole-4-carboxamide + L-glutamine = D-erythro-1-(imidazol-4-yl)glycerol 3-phosphate + 5-amino-1-(5-phospho-beta-D-ribosyl)imidazole-4-carboxamide + L-glutamate + H(+). The protein operates within amino-acid biosynthesis; L-histidine biosynthesis; L-histidine from 5-phospho-alpha-D-ribose 1-diphosphate: step 5/9. In terms of biological role, IGPS catalyzes the conversion of PRFAR and glutamine to IGP, AICAR and glutamate. The HisF subunit catalyzes the cyclization activity that produces IGP and AICAR from PRFAR using the ammonia provided by the HisH subunit. In Acidithiobacillus ferrooxidans (strain ATCC 23270 / DSM 14882 / CIP 104768 / NCIMB 8455) (Ferrobacillus ferrooxidans (strain ATCC 23270)), this protein is Imidazole glycerol phosphate synthase subunit HisF.